The primary structure comprises 516 residues: Signal recognition particle protein (516 aa).

Residues 108–115 (GLQGAGKT), 191–195 (DTAGR), and 249–252 (TKID) each bind GTP. The tract at residues 383-405 (MTPEERENPDLLTPSRRRRIASG) is disordered.

It belongs to the GTP-binding SRP family. SRP54 subfamily. As to quaternary structure, part of the signal recognition particle protein translocation system, which is composed of SRP and FtsY.

It localises to the cytoplasm. It catalyses the reaction GTP + H2O = GDP + phosphate + H(+). In terms of biological role, involved in targeting and insertion of nascent membrane proteins into the cytoplasmic membrane. Binds to the hydrophobic signal sequence of the ribosome-nascent chain (RNC) as it emerges from the ribosomes. The SRP-RNC complex is then targeted to the cytoplasmic membrane where it interacts with the SRP receptor FtsY. In Streptococcus mutans serotype c (strain ATCC 700610 / UA159), this protein is Signal recognition particle protein.